The following is a 121-amino-acid chain: Small ribosomal subunit protein uS13 (121 aa).

Residues 97–121 form a disordered region; that stretch reads VRGQRTRTNARTRRGARKTVAGKKK. Basic residues predominate over residues 100-121; the sequence is QRTRTNARTRRGARKTVAGKKK.

This sequence belongs to the universal ribosomal protein uS13 family. Part of the 30S ribosomal subunit. Forms a loose heterodimer with protein S19. Forms two bridges to the 50S subunit in the 70S ribosome.

Functionally, located at the top of the head of the 30S subunit, it contacts several helices of the 16S rRNA. In the 70S ribosome it contacts the 23S rRNA (bridge B1a) and protein L5 of the 50S subunit (bridge B1b), connecting the 2 subunits; these bridges are implicated in subunit movement. Contacts the tRNAs in the A and P-sites. In Synechococcus sp. (strain WH7803), this protein is Small ribosomal subunit protein uS13.